The following is a 426-amino-acid chain: Serine--tRNA ligase (426 aa).

230 to 232 (TAE) contributes to the L-serine binding site. 261 to 263 (RSE) is a binding site for ATP. E284 lines the L-serine pocket. 348–351 (EISS) lines the ATP pocket. S384 serves as a coordination point for L-serine.

It belongs to the class-II aminoacyl-tRNA synthetase family. Type-1 seryl-tRNA synthetase subfamily. Homodimer. The tRNA molecule binds across the dimer.

The protein localises to the cytoplasm. It catalyses the reaction tRNA(Ser) + L-serine + ATP = L-seryl-tRNA(Ser) + AMP + diphosphate + H(+). The catalysed reaction is tRNA(Sec) + L-serine + ATP = L-seryl-tRNA(Sec) + AMP + diphosphate + H(+). It functions in the pathway aminoacyl-tRNA biosynthesis; selenocysteinyl-tRNA(Sec) biosynthesis; L-seryl-tRNA(Sec) from L-serine and tRNA(Sec): step 1/1. In terms of biological role, catalyzes the attachment of serine to tRNA(Ser). Is also able to aminoacylate tRNA(Sec) with serine, to form the misacylated tRNA L-seryl-tRNA(Sec), which will be further converted into selenocysteinyl-tRNA(Sec). The protein is Serine--tRNA ligase of Phenylobacterium zucineum (strain HLK1).